The primary structure comprises 119 residues: Non-specific lipid-transfer protein 11 (119 aa).

The first 28 residues, 1–28 (MRNITTTTRKMLLLVITILLGIAYHGEA), serve as a signal peptide directing secretion. Disulfide bonds link Cys-31–Cys-78, Cys-41–Cys-55, Cys-56–Cys-101, and Cys-76–Cys-115.

Belongs to the plant LTP family.

In terms of biological role, plant non-specific lipid-transfer proteins transfer phospholipids as well as galactolipids across membranes. May play a role in wax or cutin deposition in the cell walls of expanding epidermal cells and certain secretory tissues. This is Non-specific lipid-transfer protein 11 (LTP11) from Arabidopsis thaliana (Mouse-ear cress).